A 353-amino-acid polypeptide reads, in one-letter code: Chorismate synthase (353 aa).

NADP(+)-binding residues include arginine 48 and arginine 54. Residues 125 to 127 (RSS), 238 to 239 (NA), glycine 278, 293 to 297 (KPTSS), and arginine 319 each bind FMN.

This sequence belongs to the chorismate synthase family. Homotetramer. FMNH2 serves as cofactor.

It carries out the reaction 5-O-(1-carboxyvinyl)-3-phosphoshikimate = chorismate + phosphate. It functions in the pathway metabolic intermediate biosynthesis; chorismate biosynthesis; chorismate from D-erythrose 4-phosphate and phosphoenolpyruvate: step 7/7. Catalyzes the anti-1,4-elimination of the C-3 phosphate and the C-6 proR hydrogen from 5-enolpyruvylshikimate-3-phosphate (EPSP) to yield chorismate, which is the branch point compound that serves as the starting substrate for the three terminal pathways of aromatic amino acid biosynthesis. This reaction introduces a second double bond into the aromatic ring system. This chain is Chorismate synthase, found in Buchnera aphidicola subsp. Schizaphis graminum (strain Sg).